A 1087-amino-acid chain; its full sequence is Error-prone DNA polymerase 3 (1087 aa).

The disordered stretch occupies residues 1040–1064 (AGRGDEFAHGSPGSSDTRDKSKPVV).

It belongs to the DNA polymerase type-C family. DnaE2 subfamily.

The protein localises to the cytoplasm. The enzyme catalyses DNA(n) + a 2'-deoxyribonucleoside 5'-triphosphate = DNA(n+1) + diphosphate. DNA polymerase involved in damage-induced mutagenesis and translesion synthesis (TLS). It is not the major replicative DNA polymerase. In Agrobacterium fabrum (strain C58 / ATCC 33970) (Agrobacterium tumefaciens (strain C58)), this protein is Error-prone DNA polymerase 3.